The primary structure comprises 285 residues: Meiotically up-regulated gene 74 protein (285 aa).

It is found in the cytoplasm. In terms of biological role, has a role in meiosis. This Schizosaccharomyces pombe (strain 972 / ATCC 24843) (Fission yeast) protein is Meiotically up-regulated gene 74 protein (mug74).